A 362-amino-acid polypeptide reads, in one-letter code: Cobalt-precorrin-5B C(1)-methyltransferase (362 aa).

This sequence belongs to the CbiD family.

It catalyses the reaction Co-precorrin-5B + S-adenosyl-L-methionine = Co-precorrin-6A + S-adenosyl-L-homocysteine. The protein operates within cofactor biosynthesis; adenosylcobalamin biosynthesis; cob(II)yrinate a,c-diamide from sirohydrochlorin (anaerobic route): step 6/10. Catalyzes the methylation of C-1 in cobalt-precorrin-5B to form cobalt-precorrin-6A. In Methanocaldococcus jannaschii (strain ATCC 43067 / DSM 2661 / JAL-1 / JCM 10045 / NBRC 100440) (Methanococcus jannaschii), this protein is Cobalt-precorrin-5B C(1)-methyltransferase.